Here is a 360-residue protein sequence, read N- to C-terminus: Peptide chain release factor 1 (360 aa).

Q233 carries the N5-methylglutamine modification. Residues 286–305 (NEIAQERKSQVGTGDRSERI) form a disordered region.

Belongs to the prokaryotic/mitochondrial release factor family. Post-translationally, methylated by PrmC. Methylation increases the termination efficiency of RF1.

It is found in the cytoplasm. Peptide chain release factor 1 directs the termination of translation in response to the peptide chain termination codons UAG and UAA. The sequence is that of Peptide chain release factor 1 from Acetivibrio thermocellus (strain ATCC 27405 / DSM 1237 / JCM 9322 / NBRC 103400 / NCIMB 10682 / NRRL B-4536 / VPI 7372) (Clostridium thermocellum).